Reading from the N-terminus, the 372-residue chain is uncharacterized protein (372 aa).

Basic residues-rich tracts occupy residues 1-11 (MNKILGLRRAK) and 38-48 (RLRRGMQRLSR). Residues 1–127 (MNKILGLRRA…NSGTRDTPCW (127 aa)) form a disordered region. Over residues 50-61 (GYGDNRRSRGSE) the composition is skewed to basic and acidic residues. Over residues 93 to 104 (GKTSPCGSSGTP) the composition is skewed to polar residues.

This is an uncharacterized protein from Psittacid herpesvirus 1 (isolate Amazon parrot/-/97-0001/1997) (PsHV-1).